The primary structure comprises 762 residues: 5-methyltetrahydropteroyltriglutamate--homocysteine methyltransferase (762 aa).

Residues 17 to 20 and K111 contribute to the 5-methyltetrahydropteroyltri-L-glutamate site; that span reads REWK. Residues 435–437 and E488 contribute to the L-homocysteine site; that span reads IGS. Residues 435-437 and E488 each bind L-methionine; that span reads IGS. Residues 519–520 and W565 each bind 5-methyltetrahydropteroyltri-L-glutamate; that span reads RC. Residue D603 coordinates L-homocysteine. D603 provides a ligand contact to L-methionine. Position 609 (E609) interacts with 5-methyltetrahydropteroyltri-L-glutamate. Zn(2+) contacts are provided by H645, C647, and E669. H698 functions as the Proton donor in the catalytic mechanism. Residue C730 coordinates Zn(2+).

Belongs to the vitamin-B12 independent methionine synthase family. The cofactor is Zn(2+).

It catalyses the reaction 5-methyltetrahydropteroyltri-L-glutamate + L-homocysteine = tetrahydropteroyltri-L-glutamate + L-methionine. The protein operates within amino-acid biosynthesis; L-methionine biosynthesis via de novo pathway; L-methionine from L-homocysteine (MetE route): step 1/1. In terms of biological role, catalyzes the transfer of a methyl group from 5-methyltetrahydrofolate to homocysteine resulting in methionine formation. The polypeptide is 5-methyltetrahydropteroyltriglutamate--homocysteine methyltransferase (Bacillus thuringiensis subsp. konkukian (strain 97-27)).